The following is a 445-amino-acid chain: NAD-specific glutamate dehydrogenase (445 aa).

The active site involves Lys124. 235-241 contributes to the NAD(+) binding site; the sequence is GFGNVAW.

This sequence belongs to the Glu/Leu/Phe/Val dehydrogenases family. In terms of assembly, homohexamer.

It carries out the reaction L-glutamate + NAD(+) + H2O = 2-oxoglutarate + NH4(+) + NADH + H(+). This Bacteroides fragilis (strain YCH46) protein is NAD-specific glutamate dehydrogenase (gdhB).